Reading from the N-terminus, the 291-residue chain is 4-hydroxy-tetrahydrodipicolinate synthase (291 aa).

Thr44 contacts pyruvate. Catalysis depends on Tyr132, which acts as the Proton donor/acceptor. Lys161 (schiff-base intermediate with substrate) is an active-site residue. Ile202 is a binding site for pyruvate.

Belongs to the DapA family. In terms of assembly, homotetramer; dimer of dimers.

Its subcellular location is the cytoplasm. It catalyses the reaction L-aspartate 4-semialdehyde + pyruvate = (2S,4S)-4-hydroxy-2,3,4,5-tetrahydrodipicolinate + H2O + H(+). The protein operates within amino-acid biosynthesis; L-lysine biosynthesis via DAP pathway; (S)-tetrahydrodipicolinate from L-aspartate: step 3/4. Catalyzes the condensation of (S)-aspartate-beta-semialdehyde [(S)-ASA] and pyruvate to 4-hydroxy-tetrahydrodipicolinate (HTPA). The chain is 4-hydroxy-tetrahydrodipicolinate synthase from Endomicrobium trichonymphae.